Here is a 67-residue protein sequence, read N- to C-terminus: UPF0435 protein SSP0913 (67 aa).

The protein belongs to the UPF0435 family.

In Staphylococcus saprophyticus subsp. saprophyticus (strain ATCC 15305 / DSM 20229 / NCIMB 8711 / NCTC 7292 / S-41), this protein is UPF0435 protein SSP0913.